A 1058-amino-acid polypeptide reads, in one-letter code: Kinesin-like protein KIN-7M, chloroplastic (1058 aa).

The N-terminal 60 residues, M1 to R60, are a transit peptide targeting the chloroplast. Positions M1–G92 are disordered. The span at T8–P19 shows a compositional bias: basic residues. The segment covering Y23–T49 has biased composition (low complexity). Residues V50–D70 are compositionally biased toward polar residues. The Kinesin motor domain occupies S104 to I421. G184–T191 lines the ATP pocket. Residues E422 to S509 adopt a coiled-coil conformation. Positions P549 to E578 are disordered. The span at D558–N570 shows a compositional bias: basic and acidic residues. Coiled coils occupy residues P621–A658, N704–R826, L873–D904, and K935–A999. Residues Q824–N838 show a composition bias toward low complexity. A disordered region spans residues Q824–R847. Positions A922–N946 are disordered. Basic and acidic residues predominate over residues K927–N946. Residues C1011–R1046 form an RING-type zinc finger.

The protein belongs to the TRAFAC class myosin-kinesin ATPase superfamily. Kinesin family. KIN-7 subfamily.

It localises to the plastid. Its subcellular location is the chloroplast. In Arabidopsis thaliana (Mouse-ear cress), this protein is Kinesin-like protein KIN-7M, chloroplastic.